Consider the following 269-residue polypeptide: Diadenylate cyclase (269 aa).

Positions 109 to 266 (RSGIYDLFAN…GGKMILEIDP (158 aa)) constitute a DAC domain.

Belongs to the adenylate cyclase family. DacZ subfamily. Mn(2+) serves as cofactor.

The enzyme catalyses 2 ATP = 3',3'-c-di-AMP + 2 diphosphate. Diadenylate cyclase that catalyzes the condensation of 2 ATP molecules into cyclic di-AMP (c-di-AMP). c-di-AMP is a second messenger for intracellular signal transduction involved in the control of important regulatory processes such as osmoregulation. Is essential for H.volcanii. Overexpression of DacZ leads to cell death, suggesting the need for tight regulation of c-di-AMP levels. Cannot use GTP as substrate. This Haloferax volcanii (strain ATCC 29605 / DSM 3757 / JCM 8879 / NBRC 14742 / NCIMB 2012 / VKM B-1768 / DS2) (Halobacterium volcanii) protein is Diadenylate cyclase.